A 194-amino-acid chain; its full sequence is Lymphocyte antigen 6 complex locus protein G5b (194 aa).

The first 18 residues, M1–G18, serve as a signal peptide directing secretion. Residues R26 to G118 enclose the UPAR/Ly6 domain. Disulfide bonds link C28–C55, C31–C40, C47–C73, C81–C98, and C99–C104. An N-linked (GlcNAc...) asparagine glycan is attached at N182.

In terms of processing, N-glycosylated.

The protein resides in the secreted. The protein is Lymphocyte antigen 6 complex locus protein G5b (Ly6g5b) of Rattus norvegicus (Rat).